The following is a 394-amino-acid chain: NAD(P)H-quinone oxidoreductase subunit H (394 aa).

Belongs to the complex I 49 kDa subunit family. As to quaternary structure, NDH-1 can be composed of about 15 different subunits; different subcomplexes with different compositions have been identified which probably have different functions.

It is found in the cellular thylakoid membrane. It catalyses the reaction a plastoquinone + NADH + (n+1) H(+)(in) = a plastoquinol + NAD(+) + n H(+)(out). It carries out the reaction a plastoquinone + NADPH + (n+1) H(+)(in) = a plastoquinol + NADP(+) + n H(+)(out). NDH-1 shuttles electrons from an unknown electron donor, via FMN and iron-sulfur (Fe-S) centers, to quinones in the respiratory and/or the photosynthetic chain. The immediate electron acceptor for the enzyme in this species is believed to be plastoquinone. Couples the redox reaction to proton translocation, and thus conserves the redox energy in a proton gradient. Cyanobacterial NDH-1 also plays a role in inorganic carbon-concentration. This Nostoc punctiforme (strain ATCC 29133 / PCC 73102) protein is NAD(P)H-quinone oxidoreductase subunit H.